The following is a 714-amino-acid chain: Transcription activator of gluconeogenesis UREG_00958 (714 aa).

A disordered region spans residues 1–71 (MTSNARNGPL…NAKDPLRPRR (71 aa)). Residues 38–62 (ESQTQVENSSTKQPNGQTKPMSASN) are compositionally biased toward polar residues. The zn(2)-C6 fungal-type DNA-binding region spans 78 to 106 (CFACQRAHLTCGDERPCQRCIKRGIQNSC). 3 disordered regions span residues 176–228 (SLSQ…NASG), 274–312 (GAGD…TAQP), and 539–567 (NTGG…VNPS). Polar residues predominate over residues 191 to 228 (FPSQSPVSPTFSITANSATSGNQNMPSSLPASNGNASG). A compositionally biased stretch (low complexity) spans 545 to 555 (GSTSGTSSRGS).

The protein belongs to the ERT1/acuK family.

It localises to the nucleus. Functionally, transcription factor which regulates nonfermentable carbon utilization. Activator of gluconeogenetic genes. This Uncinocarpus reesii (strain UAMH 1704) protein is Transcription activator of gluconeogenesis UREG_00958.